Reading from the N-terminus, the 151-residue chain is Neuroglobin (151 aa).

The Globin domain occupies 1 to 149; it reads MERPEPELIR…VVQAMSRGWD (149 aa). 2 residues coordinate heme b: His64 and His96.

The protein belongs to the globin family. In terms of assembly, monomer. Homodimer and homotetramer; disulfide-linked. Mainly monomeric but also detected as part of homodimers and homotetramers. Interacts with 14-3-3 proteins; regulates the phosphorylation of NGB. Could interact (ferrous form) with G-alpha(i) proteins (GTP-bound form). Post-translationally, phosphorylated during hypoxia by ERK1/ERK2. Phosphorylation regulates the heme pocket hexacoordination preventing the association of His-64 with the heme metal center. Thereby, promotes the access of dioxygen and nitrite to the heme and stimulates the nitrite reductase activity. Phosphorylation during hypoxia is stabilized by 14-3-3 proteins.

The protein resides in the cytoplasm. Its subcellular location is the cytosol. It localises to the mitochondrion matrix. The enzyme catalyses Fe(III)-heme b-[protein] + nitric oxide + H2O = Fe(II)-heme b-[protein] + nitrite + 2 H(+). In terms of biological role, monomeric globin with a bis-histidyl six-coordinate heme-iron atom through which it can bind dioxygen, carbon monoxide and nitric oxide. Could help transport oxygen and increase its availability to the metabolically active neuronal tissues, though its low quantity in tissues as well as its high affinity for dioxygen, which may limit its oxygen-releasing ability, argue against it. The ferrous/deoxygenated form exhibits a nitrite reductase activity and it could produce nitric oxide which in turn inhibits cellular respiration in response to hypoxia. In its ferrous/deoxygenated state, it may also exhibit GDI (Guanine nucleotide Dissociation Inhibitor) activity toward heterotrimeric G-alpha proteins, thereby regulating signal transduction to facilitate neuroprotective responses in the wake of hypoxia and associated oxidative stress. The sequence is that of Neuroglobin from Canis lupus familiaris (Dog).